Here is a 527-residue protein sequence, read N- to C-terminus: DNA damage-binding protein cmr1 (527 aa).

The segment at 35–90 (AGLFPPKSARSSPGGLTKPKKKPAPKKVKKEDEDLVPRRMSSRLRGLAADSEVAKR) is disordered. A compositionally biased stretch (basic residues) spans 52 to 62 (KPKKKPAPKKV). WD repeat units lie at residues 185–226 (LTPE…PISA), 249–289 (PHTR…SVEK), 296–336 (SDDI…RSAV), 341–381 (LSEK…HDEP), 388–427 (VSRL…AAWK), 450–493 (GRWV…LAQL), and 496–527 (DGIT…CLWM). The disordered stretch occupies residues 284–303 (TTSVEKYAPESTSDDIPISG).

Belongs to the WD repeat DDB2/WDR76 family.

In terms of biological role, DNA-binding protein that binds to both single- and double-stranded DNA. Binds preferentially to UV-damaged DNA. May be involved in DNA-metabolic processes. This chain is DNA damage-binding protein cmr1, found in Neosartorya fischeri (strain ATCC 1020 / DSM 3700 / CBS 544.65 / FGSC A1164 / JCM 1740 / NRRL 181 / WB 181) (Aspergillus fischerianus).